The chain runs to 444 residues: Ribosome biogenesis protein YTM1 (444 aa).

Positions Val8–Arg89 are ubiquitin-like (UBL) domain. WD repeat units follow at residues Ser99–Tyr138, Gly140–Ile178, Gly194–Ile231, Ser269–Thr309, Thr311–Ile350, Gly357–Thr397, and Gly408–Asn444. Residues Ser99–Asn444 form a sufficient for interaction with ERB1 and association with 66S pre-ribosomes region.

It belongs to the WD repeat WDR12/YTM1 family. In terms of assembly, component of the NOP7 complex, composed of ERB1, NOP7 and YTM1. The complex is held together by ERB1, which interacts with NOP7 via its N-terminal domain and with YTM1 via a high-affinity interaction between the seven-bladed beta-propeller domains of the 2 proteins. The NOP7 complex associates with the 66S pre-ribosome. Interacts (via UBL domain) with MDN1 (via VWFA/MIDAS domain).

It is found in the nucleus. It localises to the nucleolus. The protein localises to the nucleoplasm. Functionally, component of the NOP7 complex, which is required for maturation of the 25S and 5.8S ribosomal RNAs and formation of the 60S ribosome. This Kluyveromyces lactis (strain ATCC 8585 / CBS 2359 / DSM 70799 / NBRC 1267 / NRRL Y-1140 / WM37) (Yeast) protein is Ribosome biogenesis protein YTM1.